A 216-amino-acid polypeptide reads, in one-letter code: MNPDAKRLGDVRRKVTGIGDHTSHGGYLDGQLLVAMPVMGDSRFERSVIYLCAHSAEGAMGIMVNRPAGSIDFPQLLMQLNIIEKGDQISLPDSAETMKVLSGGPVDTGRGFVLHSSDYFIANATLKINDGVCLTTTIDILKAIAKGNGPKHALLALGYAGWRAGQLEEEIQDNGWLHCDADPELIFGDNVEDKYDLALRKIGIDPGMLSNAAGHA.

Belongs to the UPF0301 (AlgH) family.

The chain is UPF0301 protein BBta_6966 from Bradyrhizobium sp. (strain BTAi1 / ATCC BAA-1182).